The chain runs to 727 residues: Probable glutamate carboxypeptidase ARB_02390 (727 aa).

Positions 1-18 (MIVKSLSLLALAAATVEG) are cleaved as a signal peptide. N-linked (GlcNAc...) asparagine glycans are attached at residues asparagine 60 and asparagine 80. The region spanning 158–296 (ATAEYVYVGR…ISQLDAQPIL (139 aa)) is the PA domain. Arginine 197 contacts substrate. Asparagine 223 is a glycosylation site (N-linked (GlcNAc...) asparagine). The segment at 255–279 (FPGDPTTPGYPSRPDSPRKDKSPVV) is disordered. Positions 261 and 264 each coordinate Ca(2+). The interval 266 to 565 (SRPDSPRKDK…QFLGLLGYHL (300 aa)) is NAALADase. Residues asparagine 310, asparagine 319, and asparagine 353 are each glycosylated (N-linked (GlcNAc...) asparagine). Position 366 (histidine 366) interacts with Zn(2+). The active-site For NAALADase activity is glutamate 414. Glutamate 415 serves as a coordination point for Zn(2+). Positions 423 and 426 each coordinate Ca(2+). A Zn(2+)-binding site is contributed by aspartate 443. Residues 516–518 (TGA) and tyrosine 530 each bind substrate. Histidine 531 lines the Zn(2+) pocket. Serine 604 serves as the catalytic Charge relay system. The N-linked (GlcNAc...) asparagine glycan is linked to asparagine 614. Residue histidine 665 is the Charge relay system of the active site. Residue 675 to 676 (GY) coordinates substrate. Residue asparagine 692 is glycosylated (N-linked (GlcNAc...) asparagine).

This sequence belongs to the peptidase M28 family. M28B subfamily. It depends on Zn(2+) as a cofactor.

The protein localises to the secreted. It carries out the reaction Release of an unsubstituted, C-terminal glutamyl residue, typically from Ac-Asp-Glu or folylpoly-gamma-glutamates.. Has both folate hydrolase and N-acetylated-alpha-linked-acidic dipeptidase (NAALADase) activity. Also exhibits a dipeptidyl-peptidase IV type activity. In Arthroderma benhamiae (strain ATCC MYA-4681 / CBS 112371) (Trichophyton mentagrophytes), this protein is Probable glutamate carboxypeptidase ARB_02390.